The following is a 215-amino-acid chain: Myelin protein zero-like protein 2 (215 aa).

Positions 1–26 are cleaved as a signal peptide; it reads MYGKSPALVLPLLLSLQLTALCPTEA. The region spanning 27–141 is the Ig-like V-type domain; that stretch reads VEIYTSGALE…DGLVGTIRLS (115 aa). Residues 27-154 are Extracellular-facing; it reads VEIYTSGALE…TVPFSEIYFL (128 aa). Asparagine 39 and asparagine 118 each carry an N-linked (GlcNAc...) asparagine glycan. Residues cysteine 47 and cysteine 123 are joined by a disulfide bond. Residues 155-175 traverse the membrane as a helical segment; that stretch reads AVAIGSACALMIIVVIVVVLF. At 176–215 the chain is on the cytoplasmic side; the sequence is QHFRKKRWADRADKAEGTKSKEEEKLNQGNKVSVFVEDTD. Basic and acidic residues predominate over residues 187–201; sequence ADKAEGTKSKEEEKL. A disordered region spans residues 187–215; it reads ADKAEGTKSKEEEKLNQGNKVSVFVEDTD.

Belongs to the myelin P0 protein family. As to expression, widely expressed. Expressed in the cochlea, in Deiters' cells, possibly at contact sites with the basilar membrane. Expressed in both outer and inner auditory hair cells. In the stria vascularis, detected in the basal cell layer. Not detected in thymocytes, lymphocytes, macrophage or dendritic cells.

Its subcellular location is the membrane. Functionally, mediates homophilic cell-cell adhesion. This is Myelin protein zero-like protein 2 (Mpzl2) from Mus musculus (Mouse).